We begin with the raw amino-acid sequence, 365 residues long: Phosphatidylcholine:ceramide cholinephosphotransferase 2 (365 aa).

Basic and acidic residues predominate over residues 1–14; that stretch reads MDIIETAKLEEHLE. Residues 1–52 form a disordered region; the sequence is MDIIETAKLEEHLENQPSDPTNTYARPAEPVEEENKNGNGKPKSLSSGLRKG. Positions 15 to 24 are enriched in polar residues; that stretch reads NQPSDPTNTY. 4 helical membrane passes run 80–100, 128–148, 159–179, and 206–226; these read GIAF…ITVV, FSVS…QWLF, FCFI…VTTL, and LISG…DFLF. His229 is an active-site residue. The helical transmembrane segment at 248–268 threads the bilayer; sequence FWWYHLICWLLSAAGIICILV. Catalysis depends on residues His272 and Asp276. Residues 275 to 295 form a helical membrane-spanning segment; it reads IDVIIAYYITTRLFWWYHSMA. Over 296–365 the chain is Cytoplasmic; sequence NEKNLKVSSQ…KIGEDNEKST (70 aa). Residues Cys331, Cys332, Cys343, and Cys348 are each lipidated (S-palmitoyl cysteine).

It belongs to the sphingomyelin synthase family. Palmitoylated on Cys-331, Cys-332, Cys-343 and Cys-348; which plays an important role in plasma membrane localization. As to expression, brain, heart, kidney, liver, muscle and stomach. Also expressed in a number of cell lines such as carcinoma HeLa cells, hepatoma Hep-G2 cells, and colon carcinoma Caco-2 cells.

It localises to the cell membrane. Its subcellular location is the golgi apparatus membrane. The enzyme catalyses an N-acylsphing-4-enine + a 1,2-diacyl-sn-glycero-3-phosphocholine = a sphingomyelin + a 1,2-diacyl-sn-glycerol. It carries out the reaction an N-acylsphinganine + a 1,2-diacyl-sn-glycero-3-phosphocholine = an N-acylsphinganine-1-phosphocholine + a 1,2-diacyl-sn-glycerol. It catalyses the reaction an N-acyl-(4R)-4-hydroxysphinganine + a 1,2-diacyl-sn-glycero-3-phosphocholine = an N-acyl-(4R)-4-hydroxysphinganine-phosphocholine + a 1,2-diacyl-sn-glycerol. The catalysed reaction is an N-acylsphinganine + a 1,2-diacyl-sn-glycero-3-phosphoethanolamine = an N-acylsphinganine-1-phosphoethanolamine + a 1,2-diacyl-sn-glycerol. The enzyme catalyses an N-acyl-(4R)-4-hydroxysphinganine + a 1,2-diacyl-sn-glycero-3-phosphoethanolamine = an N-acyl-(4R)-4-hydroxysphinganine-1-phosphoethanolamine + a 1,2-diacyl-sn-glycerol. It carries out the reaction an N-acylsphing-4-enine + a 1,2-diacyl-sn-glycero-3-phosphoethanolamine = an N-acylsphing-4-enine 1-phosphoethanolamine + a 1,2-diacyl-sn-glycerol. It catalyses the reaction 1,2-dihexadecanoyl-sn-glycero-3-phosphocholine + an N-acylsphing-4-enine = 1,2-dihexadecanoyl-sn-glycerol + a sphingomyelin. The catalysed reaction is 1-(9Z-octadecenoyl)-2-acyl-sn-3-glycerol + a sphingomyelin = a 1-(9Z-octadecenoyl)-2-acyl-sn-glycero-3-phosphocholine + an N-acylsphing-4-enine. The enzyme catalyses N-hexadecanoylsphinganine + a 1,2-diacyl-sn-glycero-3-phosphocholine = N-hexadecanoyl-sphinganine-1-phosphocholine + a 1,2-diacyl-sn-glycerol. It carries out the reaction N-hexadecanoyl-(4R)-hydroxysphinganine + a 1,2-diacyl-sn-glycero-3-phosphocholine = N-hexadecanoyl-(4R)-hydroxysphinganine-phosphocholine + a 1,2-diacyl-sn-glycerol. It catalyses the reaction N-hexadecanoylsphinganine + a 1,2-diacyl-sn-glycero-3-phosphoethanolamine = N-hexadecanoyl-sphinganine-1-phosphoethanolamine + a 1,2-diacyl-sn-glycerol. The catalysed reaction is N-hexadecanoyl-(4R)-hydroxysphinganine + a 1,2-diacyl-sn-glycero-3-phosphoethanolamine = N-hexadecanoyl-(4R)-hydroxysphinganine-1-phosphoethanolamine + a 1,2-diacyl-sn-glycerol. Its pathway is sphingolipid metabolism. Inhibited by bacterial PC-phospholipase C inhibitor D609. Sphingomyelin synthase that primarily contributes to sphingomyelin synthesis and homeostasis at the plasma membrane. Catalyzes the reversible transfer of phosphocholine moiety in sphingomyelin biosynthesis: in the forward reaction transfers phosphocholine head group of phosphatidylcholine (PC) on to ceramide (CER) to form ceramide phosphocholine (sphingomyelin, SM) and diacylglycerol (DAG) as by-product, and in the reverse reaction transfers phosphocholine from SM to DAG to form PC and CER. The direction of the reaction appears to depend on the levels of CER and DAG in the plasma membrane. Does not use free phosphorylcholine or CDP-choline as donors. Can also transfer phosphoethanolamine head group of phosphatidylethanolamine (PE) on to ceramide (CER) to form ceramide phosphoethanolamine (CPE). Regulates receptor-mediated signal transduction via mitogenic DAG and proapoptotic CER, as well as via SM, a structural component of membrane rafts that serve as platforms for signal transduction and protein sorting. To a lesser extent, plays a role in secretory transport via regulation of DAG pool at the Golgi apparatus and its downstream effects on PRKD1. Required for normal bone matrix mineralization. In Homo sapiens (Human), this protein is Phosphatidylcholine:ceramide cholinephosphotransferase 2.